Consider the following 196-residue polypeptide: Probable nicotinate-nucleotide adenylyltransferase (196 aa).

The protein belongs to the NadD family.

It catalyses the reaction nicotinate beta-D-ribonucleotide + ATP + H(+) = deamido-NAD(+) + diphosphate. It functions in the pathway cofactor biosynthesis; NAD(+) biosynthesis; deamido-NAD(+) from nicotinate D-ribonucleotide: step 1/1. In terms of biological role, catalyzes the reversible adenylation of nicotinate mononucleotide (NaMN) to nicotinic acid adenine dinucleotide (NaAD). The chain is Probable nicotinate-nucleotide adenylyltransferase from Caldicellulosiruptor saccharolyticus (strain ATCC 43494 / DSM 8903 / Tp8T 6331).